A 468-amino-acid chain; its full sequence is Probable Xaa-Pro aminopeptidase pepP (468 aa).

The Mn(2+) site is built by Asp-264, Asp-275, Glu-398, and Glu-438.

The protein belongs to the peptidase M24B family. Mn(2+) is required as a cofactor.

It carries out the reaction Release of any N-terminal amino acid, including proline, that is linked to proline, even from a dipeptide or tripeptide.. Catalyzes the removal of a penultimate prolyl residue from the N-termini of peptides. This is Probable Xaa-Pro aminopeptidase pepP (pepP) from Talaromyces stipitatus (strain ATCC 10500 / CBS 375.48 / QM 6759 / NRRL 1006) (Penicillium stipitatum).